The primary structure comprises 319 residues: MKRVASRRLLAAVVLTACSSFLPLSAVHAETPEKPRIALVMKSLANEFFLTMEDGAKAYQKEHADRFELVSNGIKDETDTSSQIRIVEQMIVSGVDALVIAPADSKALVPVVKKALDAGIVVVNIDNRFDPQVLQAKKIGVPFVGPDNRKGARLVGEYLAKRLKVGDEVGIIEGVSTTTNAQQRTAGFKDAMDAAGMKIVSLQSGNWEIEKGNAVASAMLNEHPDLKALLAGNDSMALGAVSAVRAAGRAGQVKVVGYDNIQAIKPMLKDGRVLATADQFAAKQAVFGIQTALKLLAGQTPEHEKDGVVETPVELVTAP.

Positions 1–29 (MKRVASRRLLAAVVLTACSSFLPLSAVHA) are cleaved as a signal peptide.

The protein belongs to the bacterial solute-binding protein 2 family.

Its subcellular location is the periplasm. Binds specifically both D-ribose and D-allose, with affinities in the lower micromolar range. This is D-ribose/D-allose-binding protein from Pseudomonas aeruginosa (strain ATCC 15692 / DSM 22644 / CIP 104116 / JCM 14847 / LMG 12228 / 1C / PRS 101 / PAO1).